Consider the following 336-residue polypeptide: tRNA N6-adenosine threonylcarbamoyltransferase (336 aa).

Fe cation is bound by residues H114 and H118. Substrate is bound by residues 136–140 (LVSGG), D169, G182, D186, and N275. D301 is a Fe cation binding site.

It belongs to the KAE1 / TsaD family. Fe(2+) serves as cofactor.

It is found in the cytoplasm. The catalysed reaction is L-threonylcarbamoyladenylate + adenosine(37) in tRNA = N(6)-L-threonylcarbamoyladenosine(37) in tRNA + AMP + H(+). In terms of biological role, required for the formation of a threonylcarbamoyl group on adenosine at position 37 (t(6)A37) in tRNAs that read codons beginning with adenine. Is involved in the transfer of the threonylcarbamoyl moiety of threonylcarbamoyl-AMP (TC-AMP) to the N6 group of A37, together with TsaE and TsaB. TsaD likely plays a direct catalytic role in this reaction. The polypeptide is tRNA N6-adenosine threonylcarbamoyltransferase (Streptococcus pneumoniae (strain CGSP14)).